Consider the following 464-residue polypeptide: Asparagine--tRNA ligase (464 aa).

This sequence belongs to the class-II aminoacyl-tRNA synthetase family. As to quaternary structure, homodimer.

The protein resides in the cytoplasm. It carries out the reaction tRNA(Asn) + L-asparagine + ATP = L-asparaginyl-tRNA(Asn) + AMP + diphosphate + H(+). The sequence is that of Asparagine--tRNA ligase from Clostridium botulinum (strain Eklund 17B / Type B).